Here is a 276-residue protein sequence, read N- to C-terminus: MLPERVLEILREMKRERIKGASWLAKKGAEAFLTLAEELDESLLEDAIMELREEVVKVNPSMASLYNLARFIPVTNRRDILKSRALEFLRRMEEAKRELASIGAQLIDDGDVIITHSFSSTVLEIIRTAKERKKRFKVILTESSPDYEGLHLARELEFSGIEFEVITDAQMGLFCREASIAIVGADMITKDGYVVNKAGTYLLALACHENAIPFYVAAETYKFHPTLKSGDVMLMERDLIRGNVRIRNVLFDVTPWKYVRGIITELGIVIPPRDIQ.

It belongs to the eIF-2B alpha/beta/delta subunits family. Complex of two different subunits.

Its function is as follows. Catalyzes the exchange of initiation factor 2-bound GDP for GTP. This chain is Putative translation initiation factor eIF-2B subunit 2-like, found in Pyrococcus horikoshii (strain ATCC 700860 / DSM 12428 / JCM 9974 / NBRC 100139 / OT-3).